The following is a 242-amino-acid chain: Small ribosomal subunit protein uS2 (242 aa).

This sequence belongs to the universal ribosomal protein uS2 family.

The protein is Small ribosomal subunit protein uS2 of Shewanella oneidensis (strain ATCC 700550 / JCM 31522 / CIP 106686 / LMG 19005 / NCIMB 14063 / MR-1).